A 404-amino-acid chain; its full sequence is Ubiquitin-like modifier-activating enzyme 5 (404 aa).

The ATP site is built by Gly83, Asp104, Lys127, Asn150, and Asn184. Zn(2+) is bound by residues Cys226 and Cys229. Cys250 acts as the Glycyl thioester intermediate in catalysis. Positions 303 and 308 each coordinate Zn(2+). A disordered region spans residues 372–393; it reads APEKSSETSEETVTAATADETS. Residues 382–391 show a composition bias toward low complexity; it reads ETVTAATADE.

This sequence belongs to the ubiquitin-activating E1 family. UBA5 subfamily.

E1-like enzyme which activates UFM1. This is Ubiquitin-like modifier-activating enzyme 5 from Drosophila simulans (Fruit fly).